The following is a 1072-amino-acid chain: DNA-directed RNA polymerase subunit beta (1072 aa).

This sequence belongs to the RNA polymerase beta chain family. In plastids the minimal PEP RNA polymerase catalytic core is composed of four subunits: alpha, beta, beta', and beta''. When a (nuclear-encoded) sigma factor is associated with the core the holoenzyme is formed, which can initiate transcription.

The protein resides in the plastid. Its subcellular location is the chloroplast. The enzyme catalyses RNA(n) + a ribonucleoside 5'-triphosphate = RNA(n+1) + diphosphate. In terms of biological role, DNA-dependent RNA polymerase catalyzes the transcription of DNA into RNA using the four ribonucleoside triphosphates as substrates. The chain is DNA-directed RNA polymerase subunit beta from Amborella trichopoda.